A 299-amino-acid chain; its full sequence is ATP phosphoribosyltransferase (299 aa).

This sequence belongs to the ATP phosphoribosyltransferase family. Long subfamily. It depends on Mg(2+) as a cofactor.

Its subcellular location is the cytoplasm. It catalyses the reaction 1-(5-phospho-beta-D-ribosyl)-ATP + diphosphate = 5-phospho-alpha-D-ribose 1-diphosphate + ATP. The protein operates within amino-acid biosynthesis; L-histidine biosynthesis; L-histidine from 5-phospho-alpha-D-ribose 1-diphosphate: step 1/9. Its activity is regulated as follows. Feedback inhibited by histidine. Catalyzes the condensation of ATP and 5-phosphoribose 1-diphosphate to form N'-(5'-phosphoribosyl)-ATP (PR-ATP). Has a crucial role in the pathway because the rate of histidine biosynthesis seems to be controlled primarily by regulation of HisG enzymatic activity. The polypeptide is ATP phosphoribosyltransferase (hisG) (Pasteurella multocida (strain Pm70)).